A 147-amino-acid chain; its full sequence is Ponticulin-like protein C3 (147 aa).

Residues 1–20 (MKFTKSLLLLIVAVFASSNA) form the signal peptide. A lipid anchor (GPI-like-anchor amidated asparagine) is attached at N118. N-linked (GlcNAc...) asparagine glycosylation occurs at N118. Residues 119–147 (SSESDSSDSTRIGASFALFALALLSMLAL) constitute a propeptide, removed in mature form.

It belongs to the ponticulin family. The GPI-like-anchor contains a phosphoceramide group, rather than a phosphatidyl group.

It localises to the cell membrane. The sequence is that of Ponticulin-like protein C3 (ponC3) from Dictyostelium discoideum (Social amoeba).